A 374-amino-acid chain; its full sequence is RNA ligase 1 (374 aa).

ATP is bound by residues Tyr-37, Arg-54, and Lys-75. Lys-99 serves as the catalytic N6-AMP-lysine intermediate. Residues Glu-159, Lys-240, and Lys-242 each contribute to the ATP site. Asp-272 lines the Mg(2+) pocket.

This sequence belongs to the Tequatrovirus RNA ligase 1 family. Mg(2+) serves as cofactor.

It catalyses the reaction ATP + (ribonucleotide)n-3'-hydroxyl + 5'-phospho-(ribonucleotide)m = (ribonucleotide)n+m + AMP + diphosphate.. In terms of biological role, involved in countering a host defense mechanism which, following viral infection, activates the host anticodon nuclease and shuts off viral translation. Repairs 5'-PO4 and 3'-OH groups in the cleaved host tRNA. The nick ligation reaction entails three nucleotidyl transfer steps. In the first step, the RNA ligase reacts with ATP in the absence of nucleic acid to form a covalent ligase-AMP intermediate and release pyrophosphate. In step 2, the ligase-AMP binds to the nicked duplex nucleic acid and transfers the adenylate to the 5'-PO4 terminus to form an adenylylated nicked intermediate. In step 3, the RNA ligase directs the attack of the nick 3'-OH on the 5'-phosphoanhydride linkage, resulting in a repaired 3'-5' phosphodiester and release of AMP. The sequence is that of RNA ligase 1 (63) from Enterobacteria phage T4 (Bacteriophage T4).